Consider the following 348-residue polypeptide: Anthranilate phosphoribosyltransferase (348 aa).

Residues G81, 84–85, 91–94, 109–117, and S121 each bind 5-phospho-alpha-D-ribose 1-diphosphate; these read GD, NVST, and KHGNRAVSG. An anthranilate-binding site is contributed by G81. Residue S93 participates in Mg(2+) binding. Residue N112 participates in anthranilate binding. R167 is a binding site for anthranilate. D226 and E227 together coordinate Mg(2+).

Belongs to the anthranilate phosphoribosyltransferase family. Homodimer. The cofactor is Mg(2+).

It catalyses the reaction N-(5-phospho-beta-D-ribosyl)anthranilate + diphosphate = 5-phospho-alpha-D-ribose 1-diphosphate + anthranilate. It participates in amino-acid biosynthesis; L-tryptophan biosynthesis; L-tryptophan from chorismate: step 2/5. Its function is as follows. Catalyzes the transfer of the phosphoribosyl group of 5-phosphorylribose-1-pyrophosphate (PRPP) to anthranilate to yield N-(5'-phosphoribosyl)-anthranilate (PRA). The polypeptide is Anthranilate phosphoribosyltransferase (Stutzerimonas stutzeri (strain A1501) (Pseudomonas stutzeri)).